The sequence spans 695 residues: NADPH--cytochrome P450 reductase (695 aa).

Residues 1–8 lie on the Lumenal side of the membrane; sequence MAQLDTLD. Residues 9–31 traverse the membrane as a helical segment; the sequence is LVVLAVLLVGSVAYFTKGTYWAV. Over 32 to 695 the chain is Cytoplasmic; sequence AKDPYASTGP…SGSYQEDVWS (664 aa). In terms of domain architecture, Flavodoxin-like spans 66–221; sequence CVIFYGSQTG…DFLAWKEPMW (156 aa). FMN is bound by residues 72-77, 123-126, 169-178, and Asp204; these read SQTGTA, ATYG, and LGNNTYEHYN. In terms of domain architecture, FAD-binding FR-type spans 277–538; that stretch reads HNPFIAPIAE…HVRHSNFKLP (262 aa). NADP(+) is bound at residue Arg296. FAD is bound by residues 451–454, 469–471, and 486–489; these read RYYS, TAV, and GVTT. NADP(+) is bound by residues Thr552, 614 to 615, 620 to 624, and Glu656; these read SR and KVYVQ. Trp694 contributes to the FAD binding site.

Belongs to the NADPH--cytochrome P450 reductase family. The protein in the N-terminal section; belongs to the flavodoxin family. This sequence in the C-terminal section; belongs to the flavoprotein pyridine nucleotide cytochrome reductase family. Requires FAD as cofactor. FMN serves as cofactor.

It localises to the endoplasmic reticulum membrane. Its subcellular location is the mitochondrion outer membrane. The protein localises to the cell membrane. The enzyme catalyses 2 oxidized [cytochrome P450] + NADPH = 2 reduced [cytochrome P450] + NADP(+) + H(+). In terms of biological role, this enzyme is required for electron transfer from NADP to cytochrome P450 in microsomes. It can also provide electron transfer to heme oxygenase and cytochrome B5. Involved in ergosterol biosynthesis. The protein is NADPH--cytochrome P450 reductase of Aspergillus niger (strain ATCC MYA-4892 / CBS 513.88 / FGSC A1513).